The following is a 742-amino-acid chain: 5-methyltetrahydropteroyltriglutamate--homocysteine methyltransferase (742 aa).

Residues 18 to 21 (REWK) and lysine 112 contribute to the 5-methyltetrahydropteroyltri-L-glutamate site. L-homocysteine-binding positions include 420 to 422 (IGS) and glutamate 473. L-methionine is bound by residues 420 to 422 (IGS) and glutamate 473. Tryptophan 550 is a binding site for 5-methyltetrahydropteroyltri-L-glutamate. An L-homocysteine-binding site is contributed by aspartate 588. Aspartate 588 lines the L-methionine pocket. Position 594 (glutamate 594) interacts with 5-methyltetrahydropteroyltri-L-glutamate. The Zn(2+) site is built by histidine 630, cysteine 632, and glutamate 654. Histidine 683 (proton donor) is an active-site residue. Position 715 (cysteine 715) interacts with Zn(2+).

Belongs to the vitamin-B12 independent methionine synthase family. It depends on Zn(2+) as a cofactor.

It catalyses the reaction 5-methyltetrahydropteroyltri-L-glutamate + L-homocysteine = tetrahydropteroyltri-L-glutamate + L-methionine. It participates in amino-acid biosynthesis; L-methionine biosynthesis via de novo pathway; L-methionine from L-homocysteine (MetE route): step 1/1. In terms of biological role, catalyzes the transfer of a methyl group from 5-methyltetrahydrofolate to homocysteine resulting in methionine formation. This Staphylococcus aureus (strain MRSA252) protein is 5-methyltetrahydropteroyltriglutamate--homocysteine methyltransferase.